Here is a 60-residue protein sequence, read N- to C-terminus: Small ribosomal subunit protein bS21 (60 aa).

Residues 39–60 (ETPQEKRKRKAVARRRQRTRRR) form a disordered region. Positions 44–60 (KRKRKAVARRRQRTRRR) are enriched in basic residues.

This sequence belongs to the bacterial ribosomal protein bS21 family.

The protein is Small ribosomal subunit protein bS21 of Microcystis aeruginosa (strain NIES-843 / IAM M-2473).